We begin with the raw amino-acid sequence, 280 residues long: H-2 class II histocompatibility antigen gamma chain (280 aa).

Over methionine 1 to arginine 30 the chain is Cytoplasmic. Residue serine 9 is modified to Phosphoserine. A helical; Signal-anchor for type II membrane protein transmembrane segment spans residues glycine 31 to tyrosine 56. Residues glutamine 57–leucine 280 lie on the Extracellular side of the membrane. Residues asparagine 114 and asparagine 120 are each glycosylated (N-linked (GlcNAc...) asparagine). In terms of domain architecture, Thyroglobulin type-1 spans leucine 194–cysteine 255. Disulfide bonds link cysteine 197-cysteine 216, cysteine 227-cysteine 234, and cysteine 236-cysteine 255. Positions histidine 246–leucine 268 are disordered. Serine 266 is a glycosylation site (O-linked (Xyl...) (chondroitin sulfate) serine).

In terms of assembly, nonamer composed of three alpha/beta/gamma heterotrimers. Interacts with CD44; this complex is essential for the MIF-induced signaling cascade that results in B cell survival. Interacts with the mature form of CTSL; the complex survive in neutral pH environment.

It localises to the late endosome. The protein resides in the lysosome. The protein localises to the cell membrane. It is found in the endoplasmic reticulum membrane. Its subcellular location is the golgi apparatus. It localises to the trans-Golgi network. The protein resides in the endosome. The protein localises to the secreted. Plays a critical role in MHC class II antigen processing by stabilizing peptide-free class II alpha/beta heterodimers in a complex soon after their synthesis and directing transport of the complex from the endoplasmic reticulum to compartments where peptide loading of class II takes place. Enhance also the stimulation of T-cell responses through interaction with CD44. Its function is as follows. Binds to the peptide-binding site of MHC class II alpha/beta heterodimers forming an alpha-beta-CLIP complex, thereby preventing the loading of antigenic peptides to the MHC class II complex until its release by HLA-DM in the endosome. Functionally, stabilizes the conformation of mature CTSL by binding to its active site and serving as a chaperone to help maintain a pool of mature enzyme in endocytic compartments and extracellular space of antigen-presenting cells (APCs). The protein is H-2 class II histocompatibility antigen gamma chain of Rattus norvegicus (Rat).